The sequence spans 297 residues: Phosphatidylinositol N-acetylglucosaminyltransferase subunit C (297 aa).

Transmembrane regions (helical) follow at residues 67-87 (VFVV…WLFG), 88-108 (TGLA…GGDG), 153-173 (SVFM…AAIV), and 239-259 (AFGG…LLLF).

This sequence belongs to the PIGC family. As to quaternary structure, component of the glycosylphosphatidylinositol-N-acetylglucosaminyltransferase (GPI-GnT) complex composed at least by PIGA, PIGC, PIGH, PIGP, PIGQ, PIGY and DPM2. Interacts with PIGQ. Interacts with the heterodimer PIGA:PIGH.

It localises to the endoplasmic reticulum membrane. Its pathway is glycolipid biosynthesis; glycosylphosphatidylinositol-anchor biosynthesis. Its function is as follows. Part of the glycosylphosphatidylinositol-N-acetylglucosaminyltransferase (GPI-GnT) complex that catalyzes the transfer of N-acetylglucosamine from UDP-N-acetylglucosamine to phosphatidylinositol and participates in the first step of GPI biosynthesis. This chain is Phosphatidylinositol N-acetylglucosaminyltransferase subunit C, found in Rattus norvegicus (Rat).